A 248-amino-acid polypeptide reads, in one-letter code: Small ribosomal subunit protein uS2c (248 aa).

This sequence belongs to the universal ribosomal protein uS2 family.

The protein localises to the plastid. It localises to the chloroplast. This Trachelium caeruleum (Blue throatwort) protein is Small ribosomal subunit protein uS2c (rps2).